The primary structure comprises 143 residues: uncharacterized protein (143 aa).

The HTH marR-type domain maps to 5–137; it reads DARLASDLSL…LRNAADLILE (133 aa). Residues 51-74 constitute a DNA-binding region (H-T-H motif); sequence PGALAIRERVRPPSMTRVIASLAD.

As to quaternary structure, homodimer.

This is an uncharacterized protein from Mycobacterium leprae (strain TN).